The sequence spans 263 residues: 4-hydroxy-tetrahydrodipicolinate reductase (263 aa).

NAD(+) is bound at residue 10-15 (GASGKM). R38 is an NADP(+) binding site. Residues 97-99 (GTT) and 123-126 (APNF) each bind NAD(+). Catalysis depends on H153, which acts as the Proton donor/acceptor. H154 contacts (S)-2,3,4,5-tetrahydrodipicolinate. Residue K157 is the Proton donor of the active site. 163-164 (GT) provides a ligand contact to (S)-2,3,4,5-tetrahydrodipicolinate.

This sequence belongs to the DapB family.

The protein resides in the cytoplasm. It carries out the reaction (S)-2,3,4,5-tetrahydrodipicolinate + NAD(+) + H2O = (2S,4S)-4-hydroxy-2,3,4,5-tetrahydrodipicolinate + NADH + H(+). It catalyses the reaction (S)-2,3,4,5-tetrahydrodipicolinate + NADP(+) + H2O = (2S,4S)-4-hydroxy-2,3,4,5-tetrahydrodipicolinate + NADPH + H(+). The protein operates within amino-acid biosynthesis; L-lysine biosynthesis via DAP pathway; (S)-tetrahydrodipicolinate from L-aspartate: step 4/4. In terms of biological role, catalyzes the conversion of 4-hydroxy-tetrahydrodipicolinate (HTPA) to tetrahydrodipicolinate. This is 4-hydroxy-tetrahydrodipicolinate reductase from Dehalococcoides mccartyi (strain ATCC BAA-2100 / JCM 16839 / KCTC 5957 / BAV1).